Reading from the N-terminus, the 344-residue chain is Arginine N-succinyltransferase (344 aa).

Leu-125 contacts succinyl-CoA. The active-site Proton donor is His-229.

It belongs to the arginine N-succinyltransferase family.

The catalysed reaction is succinyl-CoA + L-arginine = N(2)-succinyl-L-arginine + CoA + H(+). It participates in amino-acid degradation; L-arginine degradation via AST pathway; L-glutamate and succinate from L-arginine: step 1/5. Functionally, catalyzes the transfer of succinyl-CoA to arginine to produce N(2)-succinylarginine. The polypeptide is Arginine N-succinyltransferase (Shigella boydii serotype 18 (strain CDC 3083-94 / BS512)).